A 468-amino-acid polypeptide reads, in one-letter code: 6-phosphogluconate dehydrogenase, decarboxylating (468 aa).

NADP(+) contacts are provided by residues 10–15 (GMAVMG), 33–35 (NRS), 74–76 (VKA), and N102. Residues N102 and 128 to 130 (SGG) contribute to the substrate site. The Proton acceptor role is filled by K183. A substrate-binding site is contributed by 186–187 (HN). The active-site Proton donor is the E190. 5 residues coordinate substrate: Y191, K260, R287, R445, and H451.

The protein belongs to the 6-phosphogluconate dehydrogenase family. In terms of assembly, homodimer.

It catalyses the reaction 6-phospho-D-gluconate + NADP(+) = D-ribulose 5-phosphate + CO2 + NADPH. It functions in the pathway carbohydrate degradation; pentose phosphate pathway; D-ribulose 5-phosphate from D-glucose 6-phosphate (oxidative stage): step 3/3. In terms of biological role, catalyzes the oxidative decarboxylation of 6-phosphogluconate to ribulose 5-phosphate and CO(2), with concomitant reduction of NADP to NADPH. In Escherichia coli, this protein is 6-phosphogluconate dehydrogenase, decarboxylating (gnd).